The primary structure comprises 347 residues: Outer membrane protein A (347 aa).

The first 21 residues, 1–21 (MKKQALTIIFLLVSLVTGIQA), serve as a signal peptide directing secretion. A run of 8 beta stranded transmembrane segments spans residues 26–36 (HWYLGTKMGWS), 63–74 (APVFGLFLGYEF), 78–86 (FSFEIENDT), 105–116 (NSLQLATKLSYP), 121–129 (FHIYTQLGG), 154–163 (PNVSLGAEYI), 168–175 (FITRLDYT), and 194–202 (DVALSFGWK). The interval 207-218 (NINEIFSSYIPQ) is hinge-like. One can recognise an OmpA-like domain in the interval 220–347 (SDKQYVALNE…RRVEIEVLSD (128 aa)). A disulfide bond links cysteine 321 and cysteine 333.

The protein belongs to the outer membrane OOP (TC 1.B.6) superfamily. OmpA family. Monomer and homodimer.

Its subcellular location is the cell outer membrane. With TolR probably plays a role in maintaining the position of the peptidoglycan cell wall in the periplasm. Acts as a porin with low permeability that allows slow penetration of small solutes; an internal gate slows down solute passage. In Buchnera aphidicola subsp. Schizaphis graminum (strain Sg), this protein is Outer membrane protein A.